Reading from the N-terminus, the 249-residue chain is 5'-nucleotidase SurE (249 aa).

A divalent metal cation-binding residues include Asp9, Asp10, Ser40, and Asn92.

Belongs to the SurE nucleotidase family. It depends on a divalent metal cation as a cofactor.

The protein localises to the cytoplasm. It carries out the reaction a ribonucleoside 5'-phosphate + H2O = a ribonucleoside + phosphate. Functionally, nucleotidase that shows phosphatase activity on nucleoside 5'-monophosphates. In Shewanella sediminis (strain HAW-EB3), this protein is 5'-nucleotidase SurE.